The primary structure comprises 584 residues: Isopropyl malate synthase htyA (584 aa).

Residues 39–317 (PIWLSTDLRD…ETGLDFSNLP (279 aa)) form the Pyruvate carboxyltransferase domain.

This sequence belongs to the alpha-IPM synthase/homocitrate synthase family. LeuA type 2 subfamily.

It catalyses the reaction 3-methyl-2-oxobutanoate + acetyl-CoA + H2O = (2S)-2-isopropylmalate + CoA + H(+). It functions in the pathway antifungal biosynthesis. Functionally, isopropyl malate synthase; part of the gene cluster that mediates the de novo generation of L-homotyrosine from acetyl-CoA and 4-hydroxyphenyl-pyruvate. L-homotyrosine is a building block of echinocandin B, a fungal lipidated cyclic hexapeptide that acts as an antifungal agent. L-homotyrosine 4-hydroxyphenyl-pyruvate first undergoes an aldol-type condensation by htyA with the C-2 of acetyl-CoA followed by the release of CoA to form 2-(4-hydroxybenzyl)-malate. This is followed by isomerization of 2-(4-hydroxy-benzyl)-malate to 3-(4-hydroxybenzyl)-malate by htyD. Thereafter, 3-(4-hydroxybenzyl)-malate undergoes decarboxylation and oxidation to form 2-oxo-4-(4-hydroxybenzyl)butanoic acid, coupled to reduction of NAD(+) to NADH by htyC. The product then undergoes transamination catalyzed by htyB to form L-homotyrosine. This Aspergillus rugulosus (Emericella rugulosa) protein is Isopropyl malate synthase htyA.